A 294-amino-acid chain; its full sequence is Metallophosphoesterase MPPED2 (294 aa).

The Mn(2+) site is built by D65, H67, D86, N117, and H213. A GMP-binding site is contributed by 117–118 (NH). GMP contacts are provided by residues 225-226 (KE) and 252-255 (GIHE). Residue H254 coordinates Mn(2+).

This sequence belongs to the UPF0046 family. Homodimer. Mn(2+) is required as a cofactor. Co(2+) serves as cofactor. Expressed predominantly in fetal brain.

Its activity is regulated as follows. Inhibited by nmolar levels of AMP and GMP. Displays low metallophosphoesterase activity (in vitro). May play a role in the development of the nervous system. This is Metallophosphoesterase MPPED2 (MPPED2) from Homo sapiens (Human).